Reading from the N-terminus, the 87-residue chain is Putative regulatory protein ABC2323 (87 aa).

The protein belongs to the RemA family.

The chain is Putative regulatory protein ABC2323 from Shouchella clausii (strain KSM-K16) (Alkalihalobacillus clausii).